We begin with the raw amino-acid sequence, 175 residues long: Disulfide bond formation protein B 2 (175 aa).

The Cytoplasmic portion of the chain corresponds to 1–9; sequence MYLARTRFL. The chain crosses the membrane as a helical span at residues 10-26; it reads FFLASLACASIIGVAFY. Residues 27 to 44 are Periplasmic-facing; that stretch reads LQQAVGLDPCTLCMVQRA. Cysteines 36 and 39 form a disulfide. The helical transmembrane segment at 45–61 threads the bilayer; that stretch reads AFIACGVLALCAACHAP. At 62 to 68 the chain is on the cytoplasmic side; the sequence is GPTGTRR. The helical transmembrane segment at 69–85 threads the bilayer; it reads YSLGLLLVALAGLAGAG. At 86–142 the chain is on the periplasmic side; sequence TQVWLQTASADQLIPFITRLEQILSLLSLDMCIDRLRSDALFCAEITWTLFGISLPE. The chain crosses the membrane as a helical span at residues 143–161; sequence WSLLAFTGLALLPLYPLFS. The Cytoplasmic portion of the chain corresponds to 162-175; that stretch reads ELSHWLATRDRGGY.

This sequence belongs to the DsbB family.

Its subcellular location is the cell inner membrane. Required for disulfide bond formation in some periplasmic proteins. Acts by oxidizing the DsbA protein. The chain is Disulfide bond formation protein B 2 from Pseudomonas syringae pv. syringae (strain B728a).